Here is a 271-residue protein sequence, read N- to C-terminus: Regulatory protein RecX (271 aa).

The protein belongs to the RecX family.

The protein resides in the cytoplasm. Functionally, modulates RecA activity. In Lactobacillus delbrueckii subsp. bulgaricus (strain ATCC BAA-365 / Lb-18), this protein is Regulatory protein RecX.